The sequence spans 185 residues: Peroxynitrite isomerase (185 aa).

The tract at residues Met1–Ala21 is disordered. The GXWXGXG motif lies at Gly34–Gly40. Heme b is bound at residue His171.

It belongs to the nitrobindin family. As to quaternary structure, homodimer. The cofactor is heme b.

It catalyses the reaction peroxynitrite = nitrate. It functions in the pathway nitrogen metabolism. Functionally, heme-binding protein able to scavenge peroxynitrite and to protect free L-tyrosine against peroxynitrite-mediated nitration, by acting as a peroxynitrite isomerase that converts peroxynitrite to nitrate. Therefore, this protein likely plays a role in peroxynitrite sensing and in the detoxification of reactive nitrogen and oxygen species (RNS and ROS, respectively). Is able to bind nitric oxide (NO) in vitro, but may act as a sensor of peroxynitrite levels in vivo. The sequence is that of Peroxynitrite isomerase from Streptomyces griseus subsp. griseus (strain JCM 4626 / CBS 651.72 / NBRC 13350 / KCC S-0626 / ISP 5235).